The following is a 517-amino-acid chain: Crotonobetaine/carnitine--CoA ligase (517 aa).

This sequence belongs to the ATP-dependent AMP-binding enzyme family.

The catalysed reaction is 4-(trimethylamino)butanoate + ATP + CoA = 4-(trimethylamino)butanoyl-CoA + AMP + diphosphate. The enzyme catalyses crotonobetaine + ATP + CoA = crotonobetainyl-CoA + AMP + diphosphate. It catalyses the reaction (R)-carnitine + ATP + CoA = (R)-carnitinyl-CoA + AMP + diphosphate. The protein operates within amine and polyamine metabolism; carnitine metabolism. Catalyzes the transfer of CoA to carnitine, generating the initial carnitinyl-CoA needed for the CaiB reaction cycle. Also has activity toward crotonobetaine and gamma-butyrobetaine. This Escherichia coli (strain SE11) protein is Crotonobetaine/carnitine--CoA ligase.